Consider the following 311-residue polypeptide: Glutamyl-Q tRNA(Asp) synthetase (311 aa).

Residues 14–18 and Glu50 contribute to the L-glutamate site; that span reads RYAPS. The short motif at 17-27 is the 'HIGH' region element; it reads PSPSGDLHLGN. 4 residues coordinate Zn(2+): Cys104, Cys106, Tyr125, and Cys129. Residues Tyr186 and Arg204 each coordinate L-glutamate. A 'KMSKS' region motif is present at residues 242 to 246; sequence RLAKR. Lys245 contributes to the ATP binding site.

It belongs to the class-I aminoacyl-tRNA synthetase family. GluQ subfamily. It depends on Zn(2+) as a cofactor.

Functionally, catalyzes the tRNA-independent activation of glutamate in presence of ATP and the subsequent transfer of glutamate onto a tRNA(Asp). Glutamate is transferred on the 2-amino-5-(4,5-dihydroxy-2-cyclopenten-1-yl) moiety of the queuosine in the wobble position of the QUC anticodon. The sequence is that of Glutamyl-Q tRNA(Asp) synthetase from Nocardia farcinica (strain IFM 10152).